The chain runs to 351 residues: Anthranilate phosphoribosyltransferase (351 aa).

Residues Gly-80, 83–84, Thr-88, 90–93, 108–116, and Ser-120 contribute to the 5-phospho-alpha-D-ribose 1-diphosphate site; these read GD, NIST, and KHGNRSVTS. Residue Gly-80 participates in anthranilate binding. Mg(2+) is bound at residue Ser-92. Asn-111 is a binding site for anthranilate. An anthranilate-binding site is contributed by Arg-166. Mg(2+) contacts are provided by Asp-229 and Glu-230.

This sequence belongs to the anthranilate phosphoribosyltransferase family. Homodimer. The cofactor is Mg(2+).

The catalysed reaction is N-(5-phospho-beta-D-ribosyl)anthranilate + diphosphate = 5-phospho-alpha-D-ribose 1-diphosphate + anthranilate. It participates in amino-acid biosynthesis; L-tryptophan biosynthesis; L-tryptophan from chorismate: step 2/5. Catalyzes the transfer of the phosphoribosyl group of 5-phosphorylribose-1-pyrophosphate (PRPP) to anthranilate to yield N-(5'-phosphoribosyl)-anthranilate (PRA). This chain is Anthranilate phosphoribosyltransferase, found in Chlorobium chlorochromatii (strain CaD3).